The primary structure comprises 207 residues: Outer-membrane lipoprotein LolB (207 aa).

Residues 1 to 26 form the signal peptide; that stretch reads MSKLKIDTKRRFSLLIALVLIISLSS. Residue Cys27 is the site of N-palmitoyl cysteine attachment. A lipid anchor (S-diacylglycerol cysteine) is attached at Cys27.

The protein belongs to the LolB family. In terms of assembly, monomer.

It is found in the cell outer membrane. Plays a critical role in the incorporation of lipoproteins in the outer membrane after they are released by the LolA protein. The polypeptide is Outer-membrane lipoprotein LolB (Francisella tularensis subsp. tularensis (strain WY96-3418)).